Consider the following 239-residue polypeptide: Fatty acid metabolism regulator protein (239 aa).

The HTH gntR-type domain maps to 6-74 (QSPAGFAEEY…HGKPTKVNNF (69 aa)). The H-T-H motif DNA-binding region spans 34–53 (ERELSELIGVTRTTLREVLQ).

Homodimer.

It localises to the cytoplasm. Its function is as follows. Multifunctional regulator of fatty acid metabolism. This is Fatty acid metabolism regulator protein from Yersinia enterocolitica serotype O:8 / biotype 1B (strain NCTC 13174 / 8081).